The sequence spans 130 residues: Phosphoribosyl-AMP cyclohydrolase (130 aa).

Residue Asp-77 participates in Mg(2+) binding. Cys-78 contributes to the Zn(2+) binding site. Asp-79 and Asp-81 together coordinate Mg(2+). Residues Cys-95 and Cys-102 each coordinate Zn(2+).

This sequence belongs to the PRA-CH family. In terms of assembly, homodimer. Mg(2+) serves as cofactor. Zn(2+) is required as a cofactor.

It is found in the cytoplasm. The catalysed reaction is 1-(5-phospho-beta-D-ribosyl)-5'-AMP + H2O = 1-(5-phospho-beta-D-ribosyl)-5-[(5-phospho-beta-D-ribosylamino)methylideneamino]imidazole-4-carboxamide. It functions in the pathway amino-acid biosynthesis; L-histidine biosynthesis; L-histidine from 5-phospho-alpha-D-ribose 1-diphosphate: step 3/9. Its function is as follows. Catalyzes the hydrolysis of the adenine ring of phosphoribosyl-AMP. In Pseudomonas putida (strain GB-1), this protein is Phosphoribosyl-AMP cyclohydrolase.